A 172-amino-acid chain; its full sequence is Co-chaperone protein HscB homolog (172 aa).

Residues 2–69 form the J domain; that stretch reads NHFELFNLPV…DSRAAYLLAL (68 aa).

This sequence belongs to the HscB family. Interacts with HscA and stimulates its ATPase activity.

In terms of biological role, co-chaperone involved in the maturation of iron-sulfur cluster-containing proteins. Seems to help targeting proteins to be folded toward HscA. The chain is Co-chaperone protein HscB homolog from Acinetobacter baumannii (strain AB307-0294).